Here is a 231-residue protein sequence, read N- to C-terminus: tRNA (guanine-N(1)-)-methyltransferase (231 aa).

S-adenosyl-L-methionine-binding positions include G112 and 132–137 (LGDFVL).

It belongs to the RNA methyltransferase TrmD family. Homodimer.

Its subcellular location is the cytoplasm. It carries out the reaction guanosine(37) in tRNA + S-adenosyl-L-methionine = N(1)-methylguanosine(37) in tRNA + S-adenosyl-L-homocysteine + H(+). Its function is as follows. Specifically methylates guanosine-37 in various tRNAs. The sequence is that of tRNA (guanine-N(1)-)-methyltransferase from Microcystis aeruginosa (strain NIES-843 / IAM M-2473).